Here is a 619-residue protein sequence, read N- to C-terminus: Elongation factor 4 (619 aa).

One can recognise a tr-type G domain in the interval 17–198; that stretch reads SVIRNFCIIA…RVVRAIPGPE (182 aa). GTP contacts are provided by residues 29–34 and 145–148; these read DHGKST and NKID.

Belongs to the TRAFAC class translation factor GTPase superfamily. Classic translation factor GTPase family. LepA subfamily.

It localises to the cell membrane. It catalyses the reaction GTP + H2O = GDP + phosphate + H(+). In terms of biological role, required for accurate and efficient protein synthesis under certain stress conditions. May act as a fidelity factor of the translation reaction, by catalyzing a one-codon backward translocation of tRNAs on improperly translocated ribosomes. Back-translocation proceeds from a post-translocation (POST) complex to a pre-translocation (PRE) complex, thus giving elongation factor G a second chance to translocate the tRNAs correctly. Binds to ribosomes in a GTP-dependent manner. This chain is Elongation factor 4, found in Micrococcus luteus (strain ATCC 4698 / DSM 20030 / JCM 1464 / CCM 169 / CCUG 5858 / IAM 1056 / NBRC 3333 / NCIMB 9278 / NCTC 2665 / VKM Ac-2230) (Micrococcus lysodeikticus).